A 333-amino-acid polypeptide reads, in one-letter code: Fructose-1,6-bisphosphatase class 1 (333 aa).

The Mg(2+) site is built by glutamate 92, aspartate 113, leucine 115, and aspartate 116. Substrate-binding positions include 116–119, asparagine 209, tyrosine 242, and lysine 272; that span reads DGSS. Glutamate 278 is a binding site for Mg(2+).

Belongs to the FBPase class 1 family. Homotetramer. It depends on Mg(2+) as a cofactor.

The protein resides in the cytoplasm. It carries out the reaction beta-D-fructose 1,6-bisphosphate + H2O = beta-D-fructose 6-phosphate + phosphate. The protein operates within carbohydrate biosynthesis; Calvin cycle. The polypeptide is Fructose-1,6-bisphosphatase class 1 (Chlorobium chlorochromatii (strain CaD3)).